A 1755-amino-acid polypeptide reads, in one-letter code: Transposon TyH3 Gag-Pol polyprotein (1755 aa).

Polar residues-rich tracts occupy residues 1–23, 48–60, and 127–152; these read MESQ…SVTS, TKAN…TPAS, and QSQF…GNTF. 3 disordered regions span residues 1 to 93, 126 to 173, and 352 to 421; these read MESQ…MMTQ, PQSQ…RPPP, and GSRN…SKST. The span at 153-165 shows a compositional bias: low complexity; it reads TDSSSADSDMTST. The RNA-binding stretch occupies residues 299–401; it reads NNGIHINNKV…NSKSKTARAH (103 aa). The span at 402–418 shows a compositional bias: low complexity; the sequence is NVSTSNNSPSTDNDSIS. Ser416 bears the Phosphoserine mark. The For protease activity; shared with dimeric partner role is filled by Asp461. An integrase-type zinc finger-like region spans residues 583 to 640; it reads NVHTSESTRKYPYPFIHRMLAHANAQTIRYSLKNNTITYFNESDVDWSSAIDYQCPDC. In terms of domain architecture, Integrase catalytic spans 660 to 835; that stretch reads NSYEPFQYLH…AGLDISTLLP (176 aa). Mg(2+) contacts are provided by Asp671 and Asp736. Disordered regions lie at residues 956–1087, 1092–1111, and 1130–1187; these read SKAV…ETEK, RSPS…NIVP, and DLPL…DNET. A compositionally biased stretch (low complexity) spans 960–969; it reads SPTDSTPPST. The span at 1005–1015 shows a compositional bias: polar residues; the sequence is STPQISNIEST. Over residues 1038–1053 the composition is skewed to basic and acidic residues; it reads ESSHASKSKDFRHSDS. 2 stretches are compositionally biased toward polar residues: residues 1054-1082 and 1101-1111; these read YSEN…QISD and PENNSSHNIVP. The Bipartite nuclear localization signal signature appears at 1178-1212; sequence KKRSLEDNETEIKVSRDTWNTKNMRSLEPPRSKKR. A Reverse transcriptase Ty1/copia-type domain is found at 1338–1476; it reads NNYYITQLDI…DILGLEIKYQ (139 aa). Positions 1346, 1427, 1428, 1610, 1652, and 1685 each coordinate Mg(2+). Positions 1610-1752 constitute an RNase H Ty1/copia-type domain; the sequence is DASYGNQPYY…IKTFKLLTNK (143 aa).

In terms of assembly, the capsid protein forms a homotrimer, from which the VLPs are assembled. The protease is a homodimer, whose active site consists of two apposed aspartic acid residues. Initially, virus-like particles (VLPs) are composed of the structural unprocessed proteins Gag and Gag-Pol, and also contain the host initiator methionine tRNA (tRNA(i)-Met) which serves as a primer for minus-strand DNA synthesis, and a dimer of genomic Ty RNA. Processing of the polyproteins occurs within the particle and proceeds by an ordered pathway, called maturation. First, the protease (PR) is released by autocatalytic cleavage of the Gag-Pol polyprotein yielding capsid protein p45 and a Pol-p154 precursor protein. This cleavage is a prerequisite for subsequent processing of Pol-p154 at the remaining sites to release the mature structural and catalytic proteins. Maturation takes place prior to the RT reaction and is required to produce transposition-competent VLPs.

The protein resides in the cytoplasm. Its subcellular location is the nucleus. It catalyses the reaction DNA(n) + a 2'-deoxyribonucleoside 5'-triphosphate = DNA(n+1) + diphosphate. The enzyme catalyses Endonucleolytic cleavage to 5'-phosphomonoester.. Its function is as follows. Capsid protein (CA) is the structural component of the virus-like particle (VLP), forming the shell that encapsulates the retrotransposons dimeric RNA genome. The particles are assembled from trimer-clustered units and there are holes in the capsid shells that allow for the diffusion of macromolecules. CA also has nucleocapsid-like chaperone activity, promoting primer tRNA(i)-Met annealing to the multipartite primer-binding site (PBS), dimerization of Ty1 RNA and initiation of reverse transcription. The aspartyl protease (PR) mediates the proteolytic cleavages of the Gag and Gag-Pol polyproteins after assembly of the VLP. In terms of biological role, reverse transcriptase/ribonuclease H (RT) is a multifunctional enzyme that catalyzes the conversion of the retro-elements RNA genome into dsDNA within the VLP. The enzyme displays a DNA polymerase activity that can copy either DNA or RNA templates, and a ribonuclease H (RNase H) activity that cleaves the RNA strand of RNA-DNA heteroduplexes during plus-strand synthesis and hydrolyzes RNA primers. The conversion leads to a linear dsDNA copy of the retrotransposon that includes long terminal repeats (LTRs) at both ends. Functionally, integrase (IN) targets the VLP to the nucleus, where a subparticle preintegration complex (PIC) containing at least integrase and the newly synthesized dsDNA copy of the retrotransposon must transit the nuclear membrane. Once in the nucleus, integrase performs the integration of the dsDNA into the host genome. This chain is Transposon TyH3 Gag-Pol polyprotein (TY1B), found in Saccharomyces cerevisiae (Baker's yeast).